The chain runs to 302 residues: Ubiquinone biosynthesis protein COQ4, mitochondrial (302 aa).

The N-terminal 19 residues, 1–19, are a transit peptide targeting the mitochondrion; it reads MNSSPARAVRALVQSQSRQ. Residues His176, Asp177, His180, and Glu192 each coordinate Zn(2+). The segment covering 268 to 282 has biased composition (basic and acidic residues); that stretch reads PPPDMRDARKRERDA. Residues 268-302 are disordered; it reads PPPDMRDARKRERDARRRRKQLETEAQQGLDAASL.

It belongs to the COQ4 family. In terms of assembly, component of a multi-subunit COQ enzyme complex, composed of at least COQ3, COQ4, COQ5, COQ6, COQ7 and COQ9. It depends on Zn(2+) as a cofactor.

It localises to the mitochondrion inner membrane. It carries out the reaction a 4-hydroxy-3-methoxy-5-(all-trans-polyprenyl)benzoate + H(+) = a 2-methoxy-6-(all-trans-polyprenyl)phenol + CO2. It participates in cofactor biosynthesis; ubiquinone biosynthesis. Functionally, lyase that catalyzes the C1-decarboxylation of 4-hydroxy-3-methoxy-5-(all-trans-polyprenyl)benzoic acid into 2-methoxy-6-(all-trans-polyprenyl)phenol during ubiquinone biosynthesis. This chain is Ubiquinone biosynthesis protein COQ4, mitochondrial, found in Pyricularia oryzae (strain 70-15 / ATCC MYA-4617 / FGSC 8958) (Rice blast fungus).